Here is a 537-residue protein sequence, read N- to C-terminus: Protoporphyrinogen oxidase 1, chloroplastic (537 aa).

A chloroplast-targeting transit peptide spans 1-34 (MELSLLRPTTQSLLPSFSKPNLRLNVYKPLRLRC). At Ser35 the chain carries N-acetylserine. FAD-binding positions include 63 to 68 (GGGISG), 90 to 91 (EA), and 112 to 115 (GPNS). Residues 256 to 268 (RKNAPKAERDPRL) are compositionally biased toward basic and acidic residues. The tract at residues 256–275 (RKNAPKAERDPRLPKPQGQT) is disordered. 511–513 (VAL) contacts FAD.

The protein belongs to the protoporphyrinogen/coproporphyrinogen oxidase family. Protoporphyrinogen oxidase subfamily. The cofactor is FAD. As to expression, expressed at high levels in the leaves and at low levels in the roots and floral buds.

The protein localises to the plastid. The protein resides in the chloroplast. It catalyses the reaction protoporphyrinogen IX + 3 O2 = protoporphyrin IX + 3 H2O2. Its pathway is porphyrin-containing compound metabolism; protoporphyrin-IX biosynthesis; protoporphyrin-IX from protoporphyrinogen-IX: step 1/1. It participates in porphyrin-containing compound metabolism; chlorophyll biosynthesis. Its activity is regulated as follows. Inhibited by acifluorfen. Catalyzes the 6-electron oxidation of protoporphyrinogen-IX to form protoporphyrin-IX. The chain is Protoporphyrinogen oxidase 1, chloroplastic (PPOX1) from Arabidopsis thaliana (Mouse-ear cress).